The following is a 107-amino-acid chain: Phosphoribosyl-ATP pyrophosphatase (107 aa).

The protein belongs to the PRA-PH family.

The protein localises to the cytoplasm. The catalysed reaction is 1-(5-phospho-beta-D-ribosyl)-ATP + H2O = 1-(5-phospho-beta-D-ribosyl)-5'-AMP + diphosphate + H(+). It participates in amino-acid biosynthesis; L-histidine biosynthesis; L-histidine from 5-phospho-alpha-D-ribose 1-diphosphate: step 2/9. In Mesorhizobium japonicum (strain LMG 29417 / CECT 9101 / MAFF 303099) (Mesorhizobium loti (strain MAFF 303099)), this protein is Phosphoribosyl-ATP pyrophosphatase (hisE).